A 719-amino-acid polypeptide reads, in one-letter code: MTNHSSKILVIESPNKVKTIKKYLTDDYEIVATVGHIRDLPKYTLGFNTEDFVPKWEIIQEKKPAKGVSATKKAKTVKKAVKNKKEIIDELVDKAKKADEIYLATDPDREGEAISWHVYDVLKEKGVNVNKCKRIIFNEISEKAVKNAIANPREIQKDWVSSQITRRRLDRLIGFKLSSLMKSKINADSAGRVQSIALKFITEREELINKFVPRFWWTLDVILKDGTELMLRKIDEKLKDKLGFKELEEVSGIDFNTKEDAELVKQHLSDKYRVYAIDTPKLKSSYPKEVYKTSTLQQDAINKLKWRSMKITSVAQELYEGVTIDDEQIALISYPRTDSTRLSPEYGKTVLDFVAKTYGKDYVATQSQLNGETKANKKQKAKVQDAHEAIHPIDISITPDSVKNKISSDQYSLYKLIWTRTVAHYMAAAVYELVNIRFINNNNKFYAVNNTLKFDGYKKIYTHYDDKDHLRKLDLNHFAIDKEFEAKDVLLNEHQTKPPARFTQATLIEALETEGIGRPSTYSTILDIVLKRNYAELVNGRYYKTTDLGQKLAFELDKNFPTIINKEFTKNMETTLDEIAQGTVNDVSYLQAFWNDFSEVLNEAKTNIVKKVEYIEGKNCPNCSSQLVRREGRYGPFVGCSNFPKCKFIEKSEQKAKEIVYEEGVKCELCHAKLIRRVAKKKGRNKDNTFLGCSNFPKCKYTKSLEPEKDETIRDSTII.

The region spanning 6 to 137 (SKILVIESPN…NVNKCKRIIF (132 aa)) is the Toprim domain. Glu12 and Asp106 together coordinate Mg(2+). One can recognise a Topo IA-type catalytic domain in the interval 156–601 (QKDWVSSQIT…AFWNDFSEVL (446 aa)). Positions 189 to 194 (SAGRVQ) are interaction with DNA. The active-site O-(5'-phospho-DNA)-tyrosine intermediate is the Tyr334. 2 C4-type zinc fingers span residues 620 to 646 (CPNCSSQLVRREGRYGPFVGCSNFPKC) and 667 to 699 (CELCHAKLIRRVAKKKGRNKDNTFLGCSNFPKC).

The protein belongs to the type IA topoisomerase family. As to quaternary structure, monomer. The cofactor is Mg(2+).

It catalyses the reaction ATP-independent breakage of single-stranded DNA, followed by passage and rejoining.. Functionally, releases the supercoiling and torsional tension of DNA, which is introduced during the DNA replication and transcription, by transiently cleaving and rejoining one strand of the DNA duplex. Introduces a single-strand break via transesterification at a target site in duplex DNA. The scissile phosphodiester is attacked by the catalytic tyrosine of the enzyme, resulting in the formation of a DNA-(5'-phosphotyrosyl)-enzyme intermediate and the expulsion of a 3'-OH DNA strand. The free DNA strand then undergoes passage around the unbroken strand, thus removing DNA supercoils. Finally, in the religation step, the DNA 3'-OH attacks the covalent intermediate to expel the active-site tyrosine and restore the DNA phosphodiester backbone. This chain is DNA topoisomerase 1, found in Mycoplasmoides gallisepticum (strain R(low / passage 15 / clone 2)) (Mycoplasma gallisepticum).